Consider the following 126-residue polypeptide: Ribonuclease VapC23 (126 aa).

The PINc domain maps to 2–118; the sequence is IFVDTNVFMY…GVTRIKTFDH (117 aa). Mg(2+) contacts are provided by Asp5 and Asp98.

Belongs to the PINc/VapC protein family. It depends on Mg(2+) as a cofactor.

Functionally, toxic component of a type II toxin-antitoxin (TA) system. An RNase. The cognate antitoxin is VapB23. The chain is Ribonuclease VapC23 from Mycobacterium tuberculosis (strain CDC 1551 / Oshkosh).